A 423-amino-acid polypeptide reads, in one-letter code: Hypoxia responsive morphology factor B (423 aa).

The Bipartite nuclear localization signal motif lies at 46–69 (KRSKTRRPKKEYKLQYENTKAHRV). The segment at 157 to 187 (TQNCWAYRAAYLNAVHTIFSEQICSAMEVSP) is RNA recognition motif (RRM)-like domain. Polar residues predominate over residues 243–257 (LSPQSGRGPEPSTQI). Residues 243–273 (LSPQSGRGPEPSTQIAEPGRHDSQSEQSTIS) form a disordered region.

This sequence belongs to the hrmA family.

Its subcellular location is the nucleus. Probably modulates the generation of the hypoxia-typic morphotype (called H-MORPH) with altered biofilm architecture that leads to increased host inflammation, rapid disease progression, and mortality in a murine model of invasive aspergillosis. The polypeptide is Hypoxia responsive morphology factor B (Aspergillus fumigatus (strain CBS 144.89 / FGSC A1163 / CEA10) (Neosartorya fumigata)).